A 31-amino-acid polypeptide reads, in one-letter code: Cytochrome b6-f complex subunit 6 (31 aa).

A helical transmembrane segment spans residues 3–23 (TITSYFGFLLAALTITPALFI).

This sequence belongs to the PetL family. The 4 large subunits of the cytochrome b6-f complex are cytochrome b6, subunit IV (17 kDa polypeptide, PetD), cytochrome f and the Rieske protein, while the 4 small subunits are PetG, PetL, PetM and PetN. The complex functions as a dimer.

It is found in the plastid. The protein localises to the chloroplast thylakoid membrane. Component of the cytochrome b6-f complex, which mediates electron transfer between photosystem II (PSII) and photosystem I (PSI), cyclic electron flow around PSI, and state transitions. PetL is important for photoautotrophic growth as well as for electron transfer efficiency and stability of the cytochrome b6-f complex. The protein is Cytochrome b6-f complex subunit 6 of Zea mays (Maize).